The chain runs to 318 residues: Probable metal transport system membrane protein CT_070 (318 aa).

A run of 10 helical transmembrane segments spans residues 1 to 21, 39 to 59, 64 to 84, 94 to 114, 124 to 144, 170 to 190, 196 to 216, 226 to 246, 252 to 272, and 285 to 305; these read MVAS…LVFF, IQVI…TFLV, AMYA…VCLF, QALT…IHFI, ASTA…LVFL, IFLV…SFVC, IFAF…MLLL, AVGV…AKLI, EMMV…PALS, and TSGL…VFVC.

The protein belongs to the ABC-3 integral membrane protein family.

Its subcellular location is the cell inner membrane. Functionally, part of an ATP-driven transport system CT_067/CT_068/CT_069/CT_070 for a metal. The sequence is that of Probable metal transport system membrane protein CT_070 from Chlamydia trachomatis serovar D (strain ATCC VR-885 / DSM 19411 / UW-3/Cx).